The following is a 160-amino-acid chain: MTSNLTHLNEKGEAHMVDVGGKAVTKRTARARSYVNMTAETLAVVANGDVAKGDVFATARIAGIQAAKKCADLIPLCHPLMLTRVTVDITIEANANRLCIEAQCELDGKTGVEMEALTACSVAALTVYDMCKALDKGIVISDTRLISKTGGKSGDWFYSE.

Substrate-binding positions include 76 to 78 (LCH) and 114 to 115 (ME). The active site involves aspartate 129.

Belongs to the MoaC family. In terms of assembly, homohexamer; trimer of dimers.

It catalyses the reaction (8S)-3',8-cyclo-7,8-dihydroguanosine 5'-triphosphate = cyclic pyranopterin phosphate + diphosphate. Its pathway is cofactor biosynthesis; molybdopterin biosynthesis. Functionally, catalyzes the conversion of (8S)-3',8-cyclo-7,8-dihydroguanosine 5'-triphosphate to cyclic pyranopterin monophosphate (cPMP). This chain is Cyclic pyranopterin monophosphate synthase, found in Saccharophagus degradans (strain 2-40 / ATCC 43961 / DSM 17024).